The primary structure comprises 429 residues: Glutamyl-tRNA reductase (429 aa).

Substrate contacts are provided by residues 50-53 (TCNR), Ser110, 115-117 (ETQ), and Gln121. Catalysis depends on Cys51, which acts as the Nucleophile. Residue 190-195 (GAGEMA) participates in NADP(+) binding.

This sequence belongs to the glutamyl-tRNA reductase family. Homodimer.

It carries out the reaction (S)-4-amino-5-oxopentanoate + tRNA(Glu) + NADP(+) = L-glutamyl-tRNA(Glu) + NADPH + H(+). It participates in porphyrin-containing compound metabolism; protoporphyrin-IX biosynthesis; 5-aminolevulinate from L-glutamyl-tRNA(Glu): step 1/2. Functionally, catalyzes the NADPH-dependent reduction of glutamyl-tRNA(Glu) to glutamate 1-semialdehyde (GSA). This Campylobacter hominis (strain ATCC BAA-381 / DSM 21671 / CCUG 45161 / LMG 19568 / NCTC 13146 / CH001A) protein is Glutamyl-tRNA reductase.